The chain runs to 529 residues: Glucose-6-phosphate isomerase (529 aa).

Glutamate 322 serves as the catalytic Proton donor. Catalysis depends on residues histidine 351 and lysine 455.

Belongs to the GPI family.

The protein localises to the cytoplasm. The enzyme catalyses alpha-D-glucose 6-phosphate = beta-D-fructose 6-phosphate. The protein operates within carbohydrate biosynthesis; gluconeogenesis. Its pathway is carbohydrate degradation; glycolysis; D-glyceraldehyde 3-phosphate and glycerone phosphate from D-glucose: step 2/4. In terms of biological role, catalyzes the reversible isomerization of glucose-6-phosphate to fructose-6-phosphate. The protein is Glucose-6-phosphate isomerase of Acaryochloris marina (strain MBIC 11017).